Consider the following 395-residue polypeptide: Tryptophan synthase beta chain (395 aa).

N6-(pyridoxal phosphate)lysine is present on lysine 89.

Belongs to the TrpB family. In terms of assembly, tetramer of two alpha and two beta chains. The cofactor is pyridoxal 5'-phosphate.

The catalysed reaction is (1S,2R)-1-C-(indol-3-yl)glycerol 3-phosphate + L-serine = D-glyceraldehyde 3-phosphate + L-tryptophan + H2O. Its pathway is amino-acid biosynthesis; L-tryptophan biosynthesis; L-tryptophan from chorismate: step 5/5. Functionally, the beta subunit is responsible for the synthesis of L-tryptophan from indole and L-serine. This chain is Tryptophan synthase beta chain, found in Fusobacterium nucleatum subsp. nucleatum (strain ATCC 25586 / DSM 15643 / BCRC 10681 / CIP 101130 / JCM 8532 / KCTC 2640 / LMG 13131 / VPI 4355).